Reading from the N-terminus, the 343-residue chain is DNA-directed RNA polymerase subunit alpha (343 aa).

Residues 1-236 (MQEHYYKFWR…EQLQIFLTFD (236 aa)) form an alpha N-terminal domain (alpha-NTD) region. Residues 253-343 (LNENLFRSVD…QPPQKRETQQ (91 aa)) form an alpha C-terminal domain (alpha-CTD) region.

Belongs to the RNA polymerase alpha chain family. Homodimer. The RNAP catalytic core consists of 2 alpha, 1 beta, 1 beta' and 1 omega subunit. When a sigma factor is associated with the core the holoenzyme is formed, which can initiate transcription.

The enzyme catalyses RNA(n) + a ribonucleoside 5'-triphosphate = RNA(n+1) + diphosphate. DNA-dependent RNA polymerase catalyzes the transcription of DNA into RNA using the four ribonucleoside triphosphates as substrates. This chain is DNA-directed RNA polymerase subunit alpha, found in Bdellovibrio bacteriovorus (strain ATCC 15356 / DSM 50701 / NCIMB 9529 / HD100).